Here is a 402-residue protein sequence, read N- to C-terminus: Glutamate N-acetyltransferase (402 aa).

The substrate site is built by Thr151, Lys178, Thr189, Glu267, Asn397, and Thr402. Thr189 (nucleophile) is an active-site residue.

Belongs to the ArgJ family. As to quaternary structure, heterotetramer of two alpha and two beta chains.

The protein localises to the cytoplasm. The enzyme catalyses N(2)-acetyl-L-ornithine + L-glutamate = N-acetyl-L-glutamate + L-ornithine. It functions in the pathway amino-acid biosynthesis; L-arginine biosynthesis; L-ornithine and N-acetyl-L-glutamate from L-glutamate and N(2)-acetyl-L-ornithine (cyclic): step 1/1. Catalyzes the transfer of the acetyl group from N(2)-acetylornithine to glutamate, forming N-acetylglutamate and L-ornithine. This is Glutamate N-acetyltransferase from Methanothermobacter thermautotrophicus (strain ATCC 29096 / DSM 1053 / JCM 10044 / NBRC 100330 / Delta H) (Methanobacterium thermoautotrophicum).